We begin with the raw amino-acid sequence, 417 residues long: Gamma-glutamyl phosphate reductase (417 aa).

This sequence belongs to the gamma-glutamyl phosphate reductase family.

The protein localises to the cytoplasm. The catalysed reaction is L-glutamate 5-semialdehyde + phosphate + NADP(+) = L-glutamyl 5-phosphate + NADPH + H(+). The protein operates within amino-acid biosynthesis; L-proline biosynthesis; L-glutamate 5-semialdehyde from L-glutamate: step 2/2. Catalyzes the NADPH-dependent reduction of L-glutamate 5-phosphate into L-glutamate 5-semialdehyde and phosphate. The product spontaneously undergoes cyclization to form 1-pyrroline-5-carboxylate. This Legionella pneumophila (strain Paris) protein is Gamma-glutamyl phosphate reductase.